The primary structure comprises 99 residues: Small integral membrane protein 9 (99 aa).

The N-terminal stretch at 1-26 (MEPQKLLIIGFLLCSLTCLLLETVAS) is a signal peptide. Residues 27 to 73 (SPLPLSALGIQEKTGSKPRSGGNHRSWLNNFRDYLWQLIKSALPPAA) lie on the Extracellular side of the membrane. Residues 74–94 (IVAFLLTSALMGILCCFTILV) form a helical membrane-spanning segment. The Cytoplasmic segment spans residues 95-99 (VDPVH).

It localises to the cell membrane. This chain is Small integral membrane protein 9 (SMIM9), found in Homo sapiens (Human).